Reading from the N-terminus, the 105-residue chain is Large ribosomal subunit protein uL24 (105 aa).

It belongs to the universal ribosomal protein uL24 family. In terms of assembly, part of the 50S ribosomal subunit.

In terms of biological role, one of two assembly initiator proteins, it binds directly to the 5'-end of the 23S rRNA, where it nucleates assembly of the 50S subunit. Functionally, one of the proteins that surrounds the polypeptide exit tunnel on the outside of the subunit. The chain is Large ribosomal subunit protein uL24 from Clostridium kluyveri (strain ATCC 8527 / DSM 555 / NBRC 12016 / NCIMB 10680 / K1).